The following is a 197-amino-acid chain: Imidazoleglycerol-phosphate dehydratase (197 aa).

This sequence belongs to the imidazoleglycerol-phosphate dehydratase family.

It localises to the cytoplasm. The catalysed reaction is D-erythro-1-(imidazol-4-yl)glycerol 3-phosphate = 3-(imidazol-4-yl)-2-oxopropyl phosphate + H2O. The protein operates within amino-acid biosynthesis; L-histidine biosynthesis; L-histidine from 5-phospho-alpha-D-ribose 1-diphosphate: step 6/9. This is Imidazoleglycerol-phosphate dehydratase from Nitrosomonas europaea (strain ATCC 19718 / CIP 103999 / KCTC 2705 / NBRC 14298).